The sequence spans 299 residues: Elongation factor Ts (299 aa).

The involved in Mg(2+) ion dislocation from EF-Tu stretch occupies residues 81-84 (TDFV).

The protein belongs to the EF-Ts family.

It localises to the cytoplasm. Associates with the EF-Tu.GDP complex and induces the exchange of GDP to GTP. It remains bound to the aminoacyl-tRNA.EF-Tu.GTP complex up to the GTP hydrolysis stage on the ribosome. This Halothermothrix orenii (strain H 168 / OCM 544 / DSM 9562) protein is Elongation factor Ts.